The sequence spans 93 residues: CRISPR-associated endoribonuclease Cas2 (93 aa).

Aspartate 13 lines the Mg(2+) pocket.

Belongs to the CRISPR-associated endoribonuclease Cas2 protein family. In terms of assembly, homodimer, forms a heterotetramer with a Cas1 homodimer. The cofactor is Mg(2+).

Its function is as follows. CRISPR (clustered regularly interspaced short palindromic repeat), is an adaptive immune system that provides protection against mobile genetic elements (viruses, transposable elements and conjugative plasmids). CRISPR clusters contain sequences complementary to antecedent mobile elements and target invading nucleic acids. CRISPR clusters are transcribed and processed into CRISPR RNA (crRNA). Functions as a ssRNA-specific endoribonuclease. Involved in the integration of spacer DNA into the CRISPR cassette. In Korarchaeum cryptofilum (strain OPF8), this protein is CRISPR-associated endoribonuclease Cas2.